A 377-amino-acid polypeptide reads, in one-letter code: DAR GTPase 2, mitochondrial (377 aa).

The N-terminal 21 residues, 1-21 (MATAKTWKIAREIGDAVIKAS), are a transit peptide targeting the mitochondrion. A CP-type G domain is found at 34–211 (AAAVRAISER…VLDTPGIFPP (178 aa)). The DARXP motif motif lies at 55–59 (DARIP). GTP is bound by residues 82–85 (NKME), 110–111 (NS), 150–155 (NVGKSA), and Gly207.

The protein belongs to the TRAFAC class YlqF/YawG GTPase family. MTG1 subfamily.

The protein localises to the mitochondrion. Functionally, GTPase that may function in mitochondrial ribosome assembly. The sequence is that of DAR GTPase 2, mitochondrial from Arabidopsis thaliana (Mouse-ear cress).